The primary structure comprises 245 residues: tRNA1(Val) (adenine(37)-N6)-methyltransferase (245 aa).

This sequence belongs to the methyltransferase superfamily. tRNA (adenine-N(6)-)-methyltransferase family.

It localises to the cytoplasm. It carries out the reaction adenosine(37) in tRNA1(Val) + S-adenosyl-L-methionine = N(6)-methyladenosine(37) in tRNA1(Val) + S-adenosyl-L-homocysteine + H(+). Functionally, specifically methylates the adenine in position 37 of tRNA(1)(Val) (anticodon cmo5UAC). This Erwinia tasmaniensis (strain DSM 17950 / CFBP 7177 / CIP 109463 / NCPPB 4357 / Et1/99) protein is tRNA1(Val) (adenine(37)-N6)-methyltransferase.